Here is a 125-residue protein sequence, read N- to C-terminus: Fumarate reductase subunit D (125 aa).

3 helical membrane passes run 29-49 (VTALVAPVLLLLFGLAFPLGW), 64-84 (NPITKLVVLVLVVLALFHAAH), and 102-122 (VIALWCYGMAVLGSATAGWML).

The protein belongs to the FrdD family. Part of an enzyme complex containing four subunits: a flavoprotein (FrdA), an iron-sulfur protein (FrdB), and two hydrophobic anchor proteins (FrdC and FrdD).

The protein localises to the cell membrane. Anchors the catalytic components of the fumarate reductase complex to the cell membrane, binds quinones. The sequence is that of Fumarate reductase subunit D from Mycobacterium bovis (strain BCG / Tokyo 172 / ATCC 35737 / TMC 1019).